A 288-amino-acid polypeptide reads, in one-letter code: Acetylglutamate kinase (288 aa).

Substrate is bound by residues 73-74, arginine 95, and asparagine 186; that span reads GG.

This sequence belongs to the acetylglutamate kinase family. ArgB subfamily.

Its subcellular location is the cytoplasm. The catalysed reaction is N-acetyl-L-glutamate + ATP = N-acetyl-L-glutamyl 5-phosphate + ADP. It participates in amino-acid biosynthesis; L-arginine biosynthesis; N(2)-acetyl-L-ornithine from L-glutamate: step 2/4. In terms of biological role, catalyzes the ATP-dependent phosphorylation of N-acetyl-L-glutamate. This is Acetylglutamate kinase from Pelagibacter ubique (strain HTCC1062).